The primary structure comprises 354 residues: UDP-N-acetylglucosamine--N-acetylmuramyl-(pentapeptide) pyrophosphoryl-undecaprenol N-acetylglucosamine transferase (354 aa).

Residues 15–17, Asn-127, Arg-163, Ser-191, Ile-242, 261–266, and Gln-286 each bind UDP-N-acetyl-alpha-D-glucosamine; these read TGG and ALTVSE.

This sequence belongs to the glycosyltransferase 28 family. MurG subfamily.

It is found in the cell inner membrane. The enzyme catalyses di-trans,octa-cis-undecaprenyl diphospho-N-acetyl-alpha-D-muramoyl-L-alanyl-D-glutamyl-meso-2,6-diaminopimeloyl-D-alanyl-D-alanine + UDP-N-acetyl-alpha-D-glucosamine = di-trans,octa-cis-undecaprenyl diphospho-[N-acetyl-alpha-D-glucosaminyl-(1-&gt;4)]-N-acetyl-alpha-D-muramoyl-L-alanyl-D-glutamyl-meso-2,6-diaminopimeloyl-D-alanyl-D-alanine + UDP + H(+). The protein operates within cell wall biogenesis; peptidoglycan biosynthesis. In terms of biological role, cell wall formation. Catalyzes the transfer of a GlcNAc subunit on undecaprenyl-pyrophosphoryl-MurNAc-pentapeptide (lipid intermediate I) to form undecaprenyl-pyrophosphoryl-MurNAc-(pentapeptide)GlcNAc (lipid intermediate II). The protein is UDP-N-acetylglucosamine--N-acetylmuramyl-(pentapeptide) pyrophosphoryl-undecaprenol N-acetylglucosamine transferase of Pasteurella multocida (strain Pm70).